A 399-amino-acid chain; its full sequence is MLGRSGYRALPLGDFDRFQQSSFGFLGSQKGCLSPEPGSVGPGADAPESWPSCLCHGLVSVLGFLLLLLTFPISGWFALKIVPTYERMIVFRLGRIRNPQGPGMVLLLPFIDSFQRVDLRTRAFNVPPCKLASKDGAVLSVGADVQFRIWDPVLSVMAVKDLNTATRMTAHNAMTKALLRRPLQEIQMEKLKIGDQLLLEINDVTRAWGLEVDRVELAVEAVLQPPQDSLTVPSLDSTLQQLALHLLGGSMNSAVGRVPSPGPDTLEMINEVEPPASLAGAGAEPSPKQPVAEGLLTALQPFLSEALVSQVGACYQFNVILPSGTQSIYFLDLTTGQGRVGHGEPDGIPDVVVEMAEADLQALLSKELRPLGAYMSGRLKVKGDLAVVMKLEAVLKALK.

The Tyrosine-type lysosomal sorting signal signature appears at 6–10 (GYRAL). Residue Ser28 is modified to Phosphoserine. Residues 58-78 (LVSVLGFLLLLLTFPISGWFA) traverse the membrane as a helical; Signal-anchor for type III membrane protein segment. The Cytoplasmic segment spans residues 79–399 (LKIVPTYERM…KLEAVLKALK (321 aa)). Residues 288 to 399 (KQPVAEGLLT…KLEAVLKALK (112 aa)) enclose the SCP2 domain.

This sequence belongs to the band 7/mec-2 family. In terms of assembly, interacts with STOM; may redistribute STOM from the plasma membrane to late endosomes. In terms of tissue distribution, expressed in dorsal root ganglion neurons.

The protein resides in the membrane. It localises to the cytoplasmic vesicle. It is found in the cell membrane. Its subcellular location is the late endosome membrane. The protein localises to the membrane raft. In terms of biological role, may play a role in cholesterol transfer to late endosomes. May play a role in modulating membrane acid-sensing ion channels. Can specifically inhibit proton-gated current of ASIC1 isoform 1. Can increase inactivation speed of ASIC3. May be involved in regulation of proton sensing in dorsal root ganglions. This chain is Stomatin-like protein 1 (Stoml1), found in Mus musculus (Mouse).